The sequence spans 247 residues: Protein ABHD14A (247 aa).

The chain crosses the membrane as a helical; Signal-anchor for type II membrane protein span at residues 11–31 (AALLGLGLLLVFLLYMGLPGP). N-linked (GlcNAc...) asparagine glycosylation is present at Asn43. Active-site charge relay system residues include Ser147, Asp198, and His225.

Belongs to the AB hydrolase superfamily. ABHD14 family. In terms of tissue distribution, widely expressed. Higher expression is detected in brain, kidney, heart, testis, ovary and uterus.

Its subcellular location is the cytoplasm. The protein resides in the membrane. Functionally, possible role in granule neuron development. The chain is Protein ABHD14A from Mus musculus (Mouse).